The primary structure comprises 59 residues: Eag protein (59 aa).

The protein is Eag protein (eag) of Salmonella phage P22 (Bacteriophage P22).